A 264-amino-acid chain; its full sequence is Molybdenum transport system permease protein ModB (264 aa).

The next 6 helical transmembrane spans lie at Val11–Ile31, Thr57–Ala77, Leu90–Phe110, Ile127–Val147, Trp176–Phe196, and Ala234–Gly254. Positions Leu51–Val253 constitute an ABC transmembrane type-1 domain.

Belongs to the binding-protein-dependent transport system permease family. CysTW subfamily.

The protein localises to the cell membrane. Functionally, part of the binding-protein-dependent transport system ModABCD for molybdenum; probably responsible for the translocation of the substrate across the membrane. The protein is Molybdenum transport system permease protein ModB (modB) of Mycobacterium bovis (strain ATCC BAA-935 / AF2122/97).